The chain runs to 433 residues: Probable mannan endo-1,4-beta-mannosidase F (433 aa).

Residues 1-19 (MKRQALTLIPLLGAAAAQS) form the signal peptide. One can recognise a CBM1 domain in the interval 20–53 (GPYGQCGGNDWSGATTCVSGYVCVYQNEWYSQCV). The interval 56–82 (TATSSSTTLTTTTSATTRTTTTTTSTT) is thr-rich linker. The catalytic stretch occupies residues 83-433 (SVPSSTNFPS…TEHMERIAAR (351 aa)). The N-linked (GlcNAc...) asparagine glycan is linked to N97. Substrate contacts are provided by W142 and N255. E256 acts as the Proton donor in catalysis. Y331 contacts substrate. E364 acts as the Nucleophile in catalysis. W394 provides a ligand contact to substrate.

The protein belongs to the glycosyl hydrolase 5 (cellulase A) family.

Its subcellular location is the secreted. The enzyme catalyses Random hydrolysis of (1-&gt;4)-beta-D-mannosidic linkages in mannans, galactomannans and glucomannans.. Its function is as follows. Endo-1,4-mannanase, a crucial enzyme for depolymerization of seed galactomannans and wood galactoglucomannans. This chain is Probable mannan endo-1,4-beta-mannosidase F (manF), found in Emericella nidulans (strain FGSC A4 / ATCC 38163 / CBS 112.46 / NRRL 194 / M139) (Aspergillus nidulans).